A 405-amino-acid polypeptide reads, in one-letter code: Exodeoxyribonuclease 7 large subunit (405 aa).

Belongs to the XseA family. As to quaternary structure, heterooligomer composed of large and small subunits.

The protein localises to the cytoplasm. The catalysed reaction is Exonucleolytic cleavage in either 5'- to 3'- or 3'- to 5'-direction to yield nucleoside 5'-phosphates.. Its function is as follows. Bidirectionally degrades single-stranded DNA into large acid-insoluble oligonucleotides, which are then degraded further into small acid-soluble oligonucleotides. The sequence is that of Exodeoxyribonuclease 7 large subunit from Halothermothrix orenii (strain H 168 / OCM 544 / DSM 9562).